A 334-amino-acid chain; its full sequence is Phospholipase A1 1 (334 aa).

The first 23 residues, 1–23, serve as a signal peptide directing secretion; the sequence is MMNLKYLLFFCLVQALHYCYAYG. Positions 24–33 are excised as a propeptide; that stretch reads DPSLSNELDR. A disulfide bridge connects residues cysteine 37 and cysteine 120. Serine 170 functions as the Nucleophile in the catalytic mechanism. Aspartate 198 serves as the catalytic Charge relay system. Intrachain disulfides connect cysteine 209–cysteine 214 and cysteine 252–cysteine 261. Histidine 263 serves as the catalytic Charge relay system. Cystine bridges form between cysteine 278/cysteine 302, cysteine 279/cysteine 327, and cysteine 295/cysteine 300.

It belongs to the AB hydrolase superfamily. Lipase family. Post-translationally, not glycosylated. As to expression, expressed by the venom gland.

Its subcellular location is the secreted. It carries out the reaction a 1,2-diacyl-sn-glycero-3-phosphocholine + H2O = a 2-acyl-sn-glycero-3-phosphocholine + a fatty acid + H(+). Catalyzes the hydrolysis of phosphatidylcholine with phospholipase A1 activity (3.6 U/ml). May act as an allergen and induce hemolytic activity. In vivo, a mixture of this protein and Ves a 1.02 is able to paralyze crickets. The sequence is that of Phospholipase A1 1 from Vespa affinis (Lesser banded hornet).